Here is a 36-residue protein sequence, read N- to C-terminus: MSDIN-like toxin proprotein 10 (36 aa).

Residues 1–10 (MSDINATRLP) constitute a propeptide that is removed on maturation. A cross-link (cyclopeptide (Gly-Pro)) is located at residues 11–19 (GAYPPVPMP). Positions 20–36 (CVGDADNFTLTRGENLC) are excised as a propeptide.

This sequence belongs to the MSDIN fungal toxin family. Processed by the macrocyclase-peptidase enzyme POPB to yield a toxic cyclic nonapeptide. POPB first removes 10 residues from the N-terminus. Conformational trapping of the remaining peptide forces the enzyme to release this intermediate rather than proceed to macrocyclization. The enzyme rebinds the remaining peptide in a different conformation and catalyzes macrocyclization of the N-terminal 9 residues.

Probable toxin that belongs to the MSDIN-like toxin family responsible for a large number of food poisoning cases and deaths. The chain is MSDIN-like toxin proprotein 10 from Amanita bisporigera (Destroying angel).